The primary structure comprises 160 residues: Bursicon (160 aa).

Positions 1–20 are cleaved as a signal peptide; sequence MSVLNTFLVIVALILCYVND. One can recognise a CTCK domain in the interval 38-131; sequence CQECQMTAVI…PLQCMCRPCG (94 aa). 5 disulfides stabilise this stretch: Cys41-Cys90, Cys55-Cys104, Cys65-Cys125, Cys69-Cys127, and Cys87-Cys130.

As to quaternary structure, heterodimer of burs and pburs.

It localises to the secreted. Final heterodimeric neurohormone released at the end of the molting cycle, involved in the sclerotization (tanning) of the insect cuticle, melanization and wing spreading. This is Bursicon from Bombyx mori (Silk moth).